The primary structure comprises 122 residues: Nuclear transport factor 2A (122 aa).

Methionine 1 bears the N-acetylmethionine mark. In terms of domain architecture, NTF2 spans valine 6–leucine 119.

As to quaternary structure, interacts with RAN1. Expressed in roots, stems, leaves and flowers, and, at low levels, in siliques.

The protein resides in the cytoplasm. It is found in the nucleus. It localises to the nucleus envelope. Functionally, facilitates protein transport into the nucleus. Interacts with various nucleoporins and with Ran-GDP. Could be part of a multicomponent system of cytosolic factors that assemble at the pore complex during nuclear import. In Arabidopsis thaliana (Mouse-ear cress), this protein is Nuclear transport factor 2A.